A 278-amino-acid polypeptide reads, in one-letter code: 3-methyl-2-oxobutanoate hydroxymethyltransferase 1 (278 aa).

The Mg(2+) site is built by Asp49 and Asp88. Residues Asp49 to Ser50, Asp88, and Lys118 contribute to the 3-methyl-2-oxobutanoate site. Mg(2+) is bound at residue Glu120. The active-site Proton acceptor is Glu187.

This sequence belongs to the PanB family. Homodecamer; pentamer of dimers. Mg(2+) serves as cofactor.

The protein localises to the cytoplasm. It carries out the reaction 3-methyl-2-oxobutanoate + (6R)-5,10-methylene-5,6,7,8-tetrahydrofolate + H2O = 2-dehydropantoate + (6S)-5,6,7,8-tetrahydrofolate. It functions in the pathway cofactor biosynthesis; (R)-pantothenate biosynthesis; (R)-pantoate from 3-methyl-2-oxobutanoate: step 1/2. In terms of biological role, catalyzes the reversible reaction in which hydroxymethyl group from 5,10-methylenetetrahydrofolate is transferred onto alpha-ketoisovalerate to form ketopantoate. The polypeptide is 3-methyl-2-oxobutanoate hydroxymethyltransferase 1 (Hahella chejuensis (strain KCTC 2396)).